A 183-amino-acid polypeptide reads, in one-letter code: uncharacterized protein (183 aa).

It belongs to the herpesviridae US1 family.

This is an uncharacterized protein from Human cytomegalovirus (strain AD169) (HHV-5).